The chain runs to 254 residues: N-acetylglucosamine-induced protein 1 (254 aa).

The protein localises to the cytoplasm. Functionally, N-acetylglucosamine-induced protein which plays a role in the N-acetylglucosamine metabolic pathway. The sequence is that of N-acetylglucosamine-induced protein 1 from Candida albicans (strain SC5314 / ATCC MYA-2876) (Yeast).